The chain runs to 119 residues: DNA-directed RNA polymerase subunit omega (119 aa).

This sequence belongs to the RNA polymerase subunit omega family. In terms of assembly, the RNAP catalytic core consists of 2 alpha, 1 beta, 1 beta' and 1 omega subunit. When a sigma factor is associated with the core the holoenzyme is formed, which can initiate transcription.

The catalysed reaction is RNA(n) + a ribonucleoside 5'-triphosphate = RNA(n+1) + diphosphate. In terms of biological role, promotes RNA polymerase assembly. Latches the N- and C-terminal regions of the beta' subunit thereby facilitating its interaction with the beta and alpha subunits. This is DNA-directed RNA polymerase subunit omega (rpoZ) from Caulobacter vibrioides (strain ATCC 19089 / CIP 103742 / CB 15) (Caulobacter crescentus).